The sequence spans 861 residues: Leucine--tRNA ligase (861 aa).

The short motif at 42 to 52 is the 'HIGH' region element; the sequence is PYPSGRLHMGH. Positions 619–623 match the 'KMSKS' region motif; the sequence is KMSKS. Lysine 622 serves as a coordination point for ATP.

It belongs to the class-I aminoacyl-tRNA synthetase family.

Its subcellular location is the cytoplasm. It catalyses the reaction tRNA(Leu) + L-leucine + ATP = L-leucyl-tRNA(Leu) + AMP + diphosphate. The polypeptide is Leucine--tRNA ligase (Haemophilus influenzae (strain PittGG)).